A 184-amino-acid polypeptide reads, in one-letter code: ADP-ribosylation factor-like protein 3 (184 aa).

Gly2 is lipidated: N-myristoyl glycine. Residues 24-31 (GLDNAGKT), 68-72 (DIGGQ), and 127-130 (NKQD) each bind GTP.

This sequence belongs to the small GTPase superfamily. Arf family.

It localises to the golgi apparatus. GTP-binding protein that may be involved in protein trafficking; may modulate vesicle budding and uncoating within the Golgi apparatus. This Caenorhabditis elegans protein is ADP-ribosylation factor-like protein 3 (arl-3).